A 284-amino-acid polypeptide reads, in one-letter code: MTAQIISGTELAKTIRAELADEVAKLKANGIEPGLAVILVGDDPASHSYVKGKQKACAEVGIRSLLYTFPATISEEELLAKIQELNADPTVHGILVQLPLPAHIREWSVIETIAPEKDVDGFHPINVGKMMIGQPAFLPCTPHGVLVMVKSAGIDIAGKHVVVVGRSNIVGKPVGQLFLREHATVTYAHSKTPDLAAITRQADILIVAVGKARLIGPEHVKPGAVVIDVGVNRLESGKLCGDVDFDAVKEVASYVTPVPGGVGPMTITMLLHNTMEAARQLAAK.

NADP(+) contacts are provided by residues 165 to 167 (GRS), serine 190, and valine 231.

The protein belongs to the tetrahydrofolate dehydrogenase/cyclohydrolase family. Homodimer.

The enzyme catalyses (6R)-5,10-methylene-5,6,7,8-tetrahydrofolate + NADP(+) = (6R)-5,10-methenyltetrahydrofolate + NADPH. It catalyses the reaction (6R)-5,10-methenyltetrahydrofolate + H2O = (6R)-10-formyltetrahydrofolate + H(+). It functions in the pathway one-carbon metabolism; tetrahydrofolate interconversion. Its function is as follows. Catalyzes the oxidation of 5,10-methylenetetrahydrofolate to 5,10-methenyltetrahydrofolate and then the hydrolysis of 5,10-methenyltetrahydrofolate to 10-formyltetrahydrofolate. In Geobacillus thermodenitrificans (strain NG80-2), this protein is Bifunctional protein FolD.